The sequence spans 1923 residues: Nuclear pore complex protein GP210 (1923 aa).

The first 22 residues, 1–22 (MVPVSFCFFFLLLLLSAGESSS), serve as a signal peptide directing secretion. N-linked (GlcNAc...) asparagine glycosylation is found at asparagine 73, asparagine 117, asparagine 289, asparagine 609, asparagine 863, asparagine 903, asparagine 967, asparagine 982, asparagine 1171, asparagine 1199, asparagine 1550, asparagine 1568, and asparagine 1743. In terms of domain architecture, BIG2 spans 1152-1205 (IFLVPGASYVLTIEGGPTMNVSVDYTTVDNEVAKIEKSGRLYATSPGNTTIYAT). The helical transmembrane segment at 1829 to 1849 (SVLLKILWGVLVLVVSVIILM) threads the bilayer.

This sequence belongs to the NUP210 family. Part of the nuclear pore complex (NPC). The NPC has an eight-fold symmetrical structure comprising a central transport channel and two rings, the cytoplasmic and nuclear rings, to which eight filaments are attached. The cytoplasmic filaments have loose ends, while the nuclear filaments are joined in a distal ring, forming a nuclear basket. NPCs are highly dynamic in configuration and composition, and can be devided in 3 subcomplexes, the NUP62 subcomplex, the NUP107-160 subcomplex and the NUP93 subcomplex, containing approximately 30 different nucleoporin proteins.

The protein localises to the nucleus envelope. The protein resides in the nucleus membrane. It localises to the nucleus. It is found in the nuclear pore complex. The sequence is that of Nuclear pore complex protein GP210 from Arabidopsis thaliana (Mouse-ear cress).